Reading from the N-terminus, the 532-residue chain is Amidophosphoribosyltransferase 3, chloroplastic (532 aa).

A chloroplast-targeting transit peptide spans 1–59; that stretch reads MAFSVEEISSILPNSLSANPRNVSQNTISPSFFKPSLKPYASKTLISLSCRRSLSPVFS. Cys77 acts as the Nucleophile in catalysis. The Glutamine amidotransferase type-2 domain occupies 77 to 296; sequence CGVVGIHGDP…PGEIVVVDRN (220 aa). Cys313, Cys459, Cys511, and Cys514 together coordinate [4Fe-4S] cluster.

This sequence in the C-terminal section; belongs to the purine/pyrimidine phosphoribosyltransferase family. Requires [4Fe-4S] cluster as cofactor. Mg(2+) serves as cofactor. Mostly expressed at low levels in leaves, and, to a lower extent, in cotyledons.

The protein resides in the plastid. Its subcellular location is the chloroplast stroma. The catalysed reaction is 5-phospho-beta-D-ribosylamine + L-glutamate + diphosphate = 5-phospho-alpha-D-ribose 1-diphosphate + L-glutamine + H2O. Its pathway is purine metabolism; IMP biosynthesis via de novo pathway; N(1)-(5-phospho-D-ribosyl)glycinamide from 5-phospho-alpha-D-ribose 1-diphosphate: step 1/2. Inhibited by the phenyltriazole acetic acid compound [5-(4-chlorophenyl)-1-isopropyl-1H-[1,2,4]triazol-3-yl]-acetic acid (DAS734), a bleaching herbicide. Repressed by AMP, ADP, ATP and GTP, and slightly by GMP. In terms of biological role, catalyzes the first committed step of 'de novo' purine biosynthesis from glutamine. The chain is Amidophosphoribosyltransferase 3, chloroplastic (ASE3) from Arabidopsis thaliana (Mouse-ear cress).